A 546-amino-acid polypeptide reads, in one-letter code: Probable protein kinase UbiB (546 aa).

The 379-residue stretch at 124 to 502 (DFEIKPLASA…HVRQGQSRYF (379 aa)) folds into the Protein kinase domain. Residues 130 to 138 (LASASIAQV) and Lys153 contribute to the ATP site. The Proton acceptor role is filled by Asp288. 2 consecutive transmembrane segments (helical) span residues 501 to 521 (YFLGIGATLVLSGTFLLVSRP) and 522 to 542 (EWGLMPGWLMAGGLIAWFVGW).

The protein belongs to the ABC1 family. UbiB subfamily.

It is found in the cell inner membrane. It functions in the pathway cofactor biosynthesis; ubiquinone biosynthesis [regulation]. Its function is as follows. Is probably a protein kinase regulator of UbiI activity which is involved in aerobic coenzyme Q (ubiquinone) biosynthesis. The polypeptide is Probable protein kinase UbiB (Shigella boydii serotype 18 (strain CDC 3083-94 / BS512)).